The sequence spans 163 residues: Ubiquitin-like protein 1-ribosomal protein eS31 fusion protein (163 aa).

The Ubiquitin-like domain maps to Met-1 to Gly-70. A Glycyl lysine isopeptide (Gly-Lys) (interchain with K-? in acceptor proteins) cross-link involves residue Gly-70. Residues Cys-115–Cys-138 form a C4-type zinc finger.

In the N-terminal section; belongs to the ubiquitin family. It in the C-terminal section; belongs to the eukaryotic ribosomal protein eS31 family.

This Caenorhabditis briggsae protein is Ubiquitin-like protein 1-ribosomal protein eS31 fusion protein (ubl-1).